Reading from the N-terminus, the 955-residue chain is Probable trehalose monomycolate exporter MmpL3 (955 aa).

The Cytoplasmic segment spans residues Met-1–Arg-13. A helical transmembrane segment spans residues Phe-14–Leu-34. Residues Gly-35–Glu-190 lie on the Periplasmic side of the membrane. Gln-40–Tyr-44 contacts a 1,2-diacylglycero-3-phosphoethanolamine. The chain crosses the membrane as a helical span at residues Val-191–Leu-213. Topologically, residues Pro-214–Gly-219 are cytoplasmic. A helical membrane pass occupies residues Leu-220–Gly-236. Residues Pro-237–Pro-244 are Periplasmic-facing. The chain crosses the membrane as a helical span at residues Val-245 to Val-262. Residues Ser-263 to Thr-291 are Cytoplasmic-facing. Residues Phe-292–Val-312 form a helical membrane-spanning segment. Residues Lys-313–Leu-319 are Periplasmic-facing. The helical transmembrane segment at Ile-320 to Ile-340 threads the bilayer. Residues Leu-341–Pro-401 lie on the Cytoplasmic side of the membrane. Residues Leu-402–Leu-422 form a helical membrane-spanning segment. Residues Ser-423 to Met-567 lie on the Periplasmic side of the membrane. A helical membrane pass occupies residues Val-568–Leu-588. At Pro-589–Lys-591 the chain is on the cytoplasmic side. Residues Ala-592–Val-612 form a helical membrane-spanning segment. Topologically, residues Asp-613 to Asn-621 are periplasmic. Residues Phe-622–Leu-642 traverse the membrane as a helical segment. The Cytoplasmic portion of the chain corresponds to Ala-643 to Leu-678. Residues Ile-679–Val-699 form a helical membrane-spanning segment. At Met-700–Tyr-703 the chain is on the periplasmic side. Residues Leu-704 to Val-724 traverse the membrane as a helical segment. Topologically, residues Pro-725–Leu-955 are cytoplasmic. The segment at Glu-759–Leu-955 is disordered. Composition is skewed to polar residues over residues Gly-821–Val-860 and Asn-890–Pro-902.

This sequence belongs to the resistance-nodulation-cell division (RND) (TC 2.A.6) family. MmpL subfamily.

The protein localises to the cell inner membrane. It is found in the cell septum. Its subcellular location is the cell tip. Functionally, transports trehalose monomycolate (TMM) to the cell wall. Flips TMM across the inner membrane. Membrane potential is not required for this function. Transports probably phosphatidylethanolamine (PE) as well. Contributes to membrane potential, cell wall composition, antibiotic susceptibility and fitness. The chain is Probable trehalose monomycolate exporter MmpL3 (mmpL3) from Mycobacterium leprae (strain TN).